We begin with the raw amino-acid sequence, 242 residues long: Probable 2-phosphosulfolactate phosphatase (242 aa).

It belongs to the ComB family. Mg(2+) serves as cofactor.

The catalysed reaction is (2R)-O-phospho-3-sulfolactate + H2O = (2R)-3-sulfolactate + phosphate. The sequence is that of Probable 2-phosphosulfolactate phosphatase from Prochlorococcus marinus (strain NATL2A).